A 649-amino-acid chain; its full sequence is Phospholipase A1 PLIP1, chloroplastic (649 aa).

The transit peptide at 1–67 directs the protein to the chloroplast; that stretch reads MAFNTAMAST…NNRILAVSVR (67 aa). Residues 420–424 carry the GXSXG motif; that stretch reads GHSLG. S422 serves as the catalytic Acyl-ester intermediate. Residues D483 and H593 each act as charge relay system in the active site.

Belongs to the AB hydrolase superfamily. Lipase family.

It is found in the plastid. It localises to the chloroplast thylakoid membrane. The catalysed reaction is a 1,2-diacyl-sn-glycero-3-phosphocholine + H2O = a 2-acyl-sn-glycero-3-phosphocholine + a fatty acid + H(+). It catalyses the reaction a 1,2-diacyl-3-O-(beta-D-galactosyl)-sn-glycerol + 2 H2O = 3-beta-D-galactosyl-sn-glycerol + 2 a fatty acid + 2 H(+). In terms of biological role, sn-1-specific phospholipase A1 involved in seed oil biosynthesis. Hydrolyzes polyunsaturated acyl groups from a unique chloroplast-specific phosphatidylglycerol (PG) that contains 16:1 delta 3-trans as its second acyl group. The polyunsaturated acyl groups released by PLIP1 are exported from the chloroplast, reincorporated into phosphatidylcholine (PC), and ultimately enter seed triacylglycerol (TAG). In vitro, possesses broad substrate specificity. Can hydrolyze the galactolipid monogalactosyldiacylglycerol (MGDG), and the phoshpolipids phosphatidylcholine (PC), phosphatidylethanolamine (PE), phosphatidic acid (PA), phosphatidylserine (PS) phosphatidylglycerol (PG) and phosphatidylinositol (PI). In Arabidopsis thaliana (Mouse-ear cress), this protein is Phospholipase A1 PLIP1, chloroplastic.